The sequence spans 177 residues: DELTA-stichotoxin-Hmg2b (177 aa).

Positions 3 to 12 (ALAGTIIAGA) are plays an important role in the hemolytic activity. An N-terminal region region spans residues 11-30 (GASLGFQILDKVLGELGKVS). Phosphocholine-binding residues include Ser-54, Val-87, Ser-105, Pro-107, Tyr-133, Tyr-137, and Tyr-138.

Belongs to the actinoporin family. Sea anemone subfamily. In terms of assembly, octamer or nonamer in membranes. Monomer in the soluble state.

Its subcellular location is the secreted. The protein resides in the nematocyst. The protein localises to the target cell membrane. In terms of biological role, pore-forming protein that forms cations-selective hydrophilic pores of around 1 nm and causes cytolysis. Pore formation is a multi-step process that involves specific recognition of membrane sphingomyelin (but neither cholesterol nor phosphatidylcholine) using aromatic rich region and adjacent phosphocholine (POC) binding site, firm binding to the membrane (mainly driven by hydrophobic interactions) accompanied by the transfer of the N-terminal region to the lipid-water interface and finally pore formation after oligomerization of monomers This toxin shows hemolytic activity. The chain is DELTA-stichotoxin-Hmg2b from Heteractis magnifica (Magnificent sea anemone).